The following is a 438-amino-acid chain: Putative permease HI_0125 (438 aa).

13 helical membrane passes run 21-41 (IIAG…VPNM), 51-71 (SVFI…GLWA), 73-93 (APMA…SLVI), 97-117 (VAIP…TLIS), 137-157 (AGIG…GLVV), 167-187 (LGDF…LIIG), 195-215 (GGIL…DPNV), 238-258 (FMGA…MTAV), 296-316 (LFSG…AAGT), 326-346 (AIVV…AFLV), 347-367 (PGYA…SNVS), 386-406 (FIVL…ALVI), and 418-438 (NVGT…GWAI). Residue 315–322 (GTAAGGKT) participates in ATP binding.

The protein belongs to the nucleobase:cation symporter-2 (NCS2) (TC 2.A.40) family. Azg-like subfamily.

It is found in the cell membrane. The sequence is that of Putative permease HI_0125 from Haemophilus influenzae (strain ATCC 51907 / DSM 11121 / KW20 / Rd).